A 160-amino-acid polypeptide reads, in one-letter code: MLSPKRTKFRKQHRGRMKGIASKGNTIAFGQFALQAQDCGWVTARQIEASRRAMTRYVKRGGKIWIRIFPDKPVTMRPAETRMGSGKGNPEFWVAVVKPGRILFEMGGEEITEEIAKEAMRLAQYKLPVKTKFISSDKIVGGDSPVEKAIEKESTEEVKK.

It belongs to the universal ribosomal protein uL16 family. In terms of assembly, part of the 50S ribosomal subunit.

Binds 23S rRNA and is also seen to make contacts with the A and possibly P site tRNAs. The sequence is that of Large ribosomal subunit protein uL16 from Prochlorococcus marinus (strain MIT 9515).